We begin with the raw amino-acid sequence, 1073 residues long: TSC22 domain family protein 1 (1073 aa).

The segment at 1–98 (MHQPPESTAA…SQAQLQAQPL (98 aa)) is required for interaction with TGFBR1 and promotion of TGF-beta signaling. Disordered stretches follow at residues 22 to 110 (MAHP…KKSG), 125 to 205 (ISSN…PHLP), 220 to 288 (LHHH…SPAS), 458 to 486 (VTSE…SVGS), 607 to 628 (YSQA…QQLQ), and 742 to 766 (VQQP…QVVP). The span at 36 to 45 (GSASALNAAG) shows a compositional bias: low complexity. A compositionally biased stretch (pro residues) spans 58–70 (FPPPSLLQPPPPA). Low complexity predominate over residues 84-100 (SLNLLSQAQLQAQPLAP). Residues 133–142 (EDTESYDDLD) show a composition bias toward acidic residues. The span at 220–240 (LHHHHQIHHGHHLQHGHHHPS) shows a compositional bias: basic residues. The span at 257 to 271 (PVSRKLSTTGSSDSI) shows a compositional bias: polar residues. Residue S263 is modified to Phosphoserine. 2 stretches are compositionally biased toward low complexity: residues 272–288 (TPVA…SPAS) and 465–483 (TSGS…YTES). Residues 614-625 (VQTPLPGAPPPQ) show a composition bias toward pro residues. Residues 742–764 (VQQPSTQVPPSVIQQGAPPSSQV) are compositionally biased toward polar residues. Positions 1006–1027 (LKEQIKELIEKNSQLEQENNLL) are leucine-zipper. Residues 1037–1073 (AQFQAQLQTGSPPATTQPQGTTQPPAQPASQGSGPTA) are disordered. Low complexity predominate over residues 1044–1073 (QTGSPPATTQPQGTTQPPAQPASQGSGPTA).

This sequence belongs to the TSC-22/Dip/Bun family. In terms of assembly, forms homodimers. Forms heterodimers. Component of a complex composed of TSC22D1 (via N-terminus), TGFBR1 and TGFBR2; the interaction between TSC22D1 and TGFBR1 is inhibited by SMAD7 and promoted by TGFB1. Interacts with SMAD7; the interaction requires TGF-beta and the interaction is inhibited by TGFBR1. Interacts with TPT1/fortilin; interaction results in the destabilization of TSC22D1 protein and prevents TSC22D1-mediated apoptosis. Interacts with SMAD4 (via N-terminus). Interacts with ACVRL1/ALK1, ACVR1/ALK2, BMPR1A/ALK3, ACVR1B/ALK4, BMPR1B/ALK6, ACVR2A/ACTRII, and BMPR2. Interacts with SMAD6. Interacts with TFE3; the interaction is enhanced in the presence of TGF-beta. Forms a heterodimer with TSC22D4/THG1. As to quaternary structure, forms a heterodimer with TSC22D4/THG1. Interacts with histone H1-2. Interacts with GNL3. In terms of assembly, interacts with histone H1-2. Ubiquitously expressed in adult tissues. Expressed in the postmitotic epithelial compartment at the top of intestinal mucosal villi.

The protein resides in the cytoplasm. The protein localises to the nucleus. Its subcellular location is the cell membrane. It is found in the mitochondrion. Its function is as follows. Transcriptional repressor. Acts on the C-type natriuretic peptide (CNP) promoter. Acts to promote CASP3-mediated apoptosis. Positively regulates TGF-beta signaling by interacting with SMAD7 which inhibits binding of SMAD7 to TGFBR1, preventing recruitment of SMURF ubiquitin ligases to TGFBR1 and inhibiting SMURF-mediated ubiquitination and degradation of TGFBR1. Contributes to enhancement of TGF-beta signaling by binding to and modulating the transcription activator activity of SMAD4. Promotes TGF-beta-induced transcription of COL1A2; via its interaction with TFE3 at E-boxes in the gene proximal promoter. Plays a role in the repression of hematopoietic precursor cell growth. Promotes IL2 deprivation-induced apoptosis in T-lymphocytes, via repression of TSC22D3/GILZ transcription and activation of the caspase cascade. In terms of biological role, may act to negatively regulate TGFB3 signaling and thereby inhibit cell death in mammary gland cells. Functionally, positively regulates cell death in response to TGFB3 during mammary gland involution. The polypeptide is TSC22 domain family protein 1 (Homo sapiens (Human)).